Consider the following 69-residue polypeptide: Protein transport protein Sec61 subunit gamma-3 (69 aa).

Met1 is modified (N-acetylmethionine). Residues 1–32 lie on the Cytoplasmic side of the membrane; sequence MEAIDSAIDPLRDFAKSSVRLVQRCHKPDRKE. A helical transmembrane segment spans residues 33–61; sequence FTKVAVRTAIGFVVMGFVGFFVKLVFIPI. Residues 62–69 are Extracellular-facing; the sequence is NNIIVGSS.

Belongs to the SecE/SEC61-gamma family. As to quaternary structure, heterotrimeric complex composed of SEC61-alpha, SEC61-beta and SEC61-gamma.

Its subcellular location is the endoplasmic reticulum membrane. In terms of biological role, necessary for protein translocation in the endoplasmic reticulum. In Arabidopsis thaliana (Mouse-ear cress), this protein is Protein transport protein Sec61 subunit gamma-3 (SEC61G3).